Reading from the N-terminus, the 82-residue chain is Small ribosomal subunit protein bS16 (82 aa).

It belongs to the bacterial ribosomal protein bS16 family.

This chain is Small ribosomal subunit protein bS16, found in Vibrio parahaemolyticus serotype O3:K6 (strain RIMD 2210633).